Here is a 493-residue protein sequence, read N- to C-terminus: Probable malate:quinone oxidoreductase (493 aa).

This sequence belongs to the MQO family. Requires FAD as cofactor.

It carries out the reaction (S)-malate + a quinone = a quinol + oxaloacetate. It functions in the pathway carbohydrate metabolism; tricarboxylic acid cycle; oxaloacetate from (S)-malate (quinone route): step 1/1. This is Probable malate:quinone oxidoreductase from Lysinibacillus sphaericus (strain C3-41).